A 32-amino-acid polypeptide reads, in one-letter code: Cytochrome c3, 10 kDa (32 aa).

Positions 16, 25, 28, and 29 each coordinate heme.

As to quaternary structure, monomer. Post-translationally, binds 1 heme group per subunit.

The protein localises to the periplasm. In terms of biological role, participates in sulfate respiration coupled with phosphorylation by transferring electrons from the enzyme dehydrogenase to ferredoxin. In Desulfuromonas acetoxidans (Chloropseudomonas ethylica), this protein is Cytochrome c3, 10 kDa.